Reading from the N-terminus, the 142-residue chain is Protein archease (142 aa).

2 residues coordinate Ca(2+): Asp-12 and Asp-141.

It belongs to the archease family.

Functionally, activates the tRNA-splicing ligase complex by facilitating the enzymatic turnover of catalytic subunit RtcB. Acts by promoting the guanylylation of RtcB, a key intermediate step in tRNA ligation. Can also alter the NTP specificity of RtcB such that ATP, dGTP or ITP is used efficiently. This is Protein archease from Thermococcus kodakarensis (strain ATCC BAA-918 / JCM 12380 / KOD1) (Pyrococcus kodakaraensis (strain KOD1)).